Consider the following 679-residue polypeptide: Genome polyprotein (679 aa).

The propeptide at 1–14 (SAGMIIMLIPTVMA) is ER anchor for the capsid protein C, removed in mature form by serine protease NS3. Residues 2-22 (AGMIIMLIPTVMAFHLTTRNG) form a helical membrane-spanning segment. Residues 23-138 (EPHMIVSRQE…GAWKHAQRIE (116 aa)) are Extracellular-facing. Residue N83 is glycosylated (N-linked (GlcNAc...) asparagine; by host). Residues 139–159 (IWILRHPGFTIMAAILAYTIG) traverse the membrane as a helical segment. Topologically, residues 160-165 (TTHFQR) are cytoplasmic. The helical transmembrane segment at 166-180 (ALIFILLTAVAPSMT) threads the bilayer. Over 181 to 625 (MRCIGISNRD…LHQVFGAIYG (445 aa)) the chain is Extracellular. 4 disulfides stabilise this stretch: C183–C210, C240–C301, C254–C285, and C272–C296. Residue N247 is glycosylated (N-linked (GlcNAc...) asparagine; by host). The fusion peptide stretch occupies residues 278-291 (DRGWGNGCGLFGKG). N333 is a glycosylation site (N-linked (GlcNAc...) asparagine; by host). Intrachain disulfides connect C365-C465 and C482-C513. A helical transmembrane segment spans residues 626–646 (AAFSGVSWTMKILIGVIITWI). Residues 647–652 (GMNSRS) lie on the Cytoplasmic side of the membrane. Residues 653–673 (TSLSVSLVLVGIVTLYLGVMV) form a helical membrane-spanning segment. The Extracellular segment spans residues 674 to 679 (QADSGC).

In terms of assembly, forms heterodimers with envelope protein E in the endoplasmic reticulum and Golgi. Homodimer; in the endoplasmic reticulum and Golgi. Interacts with protein prM. Interacts with non-structural protein 1. Post-translationally, cleaved in post-Golgi vesicles by a host furin, releasing the mature small envelope protein M, and peptide pr. This cleavage is incomplete as up to 30% of viral particles still carry uncleaved prM. In terms of processing, N-glycosylated. N-glycosylated. The excreted form is glycosylated and this is required for efficient secretion of the protein from infected cells. Post-translationally, specific enzymatic cleavages in vivo yield mature proteins. Cleavages in the lumen of endoplasmic reticulum are performed by host signal peptidase, wereas cleavages in the cytoplasmic side are performed by serine protease NS3. Signal cleavage at the 2K-4B site requires a prior NS3 protease-mediated cleavage at the 4A-2K site.

Its subcellular location is the secreted. It localises to the virion membrane. It is found in the host endoplasmic reticulum membrane. Prevents premature fusion activity of envelope proteins in trans-Golgi by binding to envelope protein E at pH6.0. After virion release in extracellular space, gets dissociated from E dimers. Its function is as follows. Acts as a chaperone for envelope protein E during intracellular virion assembly by masking and inactivating envelope protein E fusion peptide. prM is the only viral peptide matured by host furin in the trans-Golgi network probably to avoid catastrophic activation of the viral fusion activity in acidic Golgi compartment prior to virion release. prM-E cleavage is inefficient, and many virions are only partially matured. These uncleaved prM would play a role in immune evasion. Functionally, may play a role in virus budding. Exerts cytotoxic effects by activating a mitochondrial apoptotic pathway through M ectodomain. May display a viroporin activity. In terms of biological role, binds to host cell surface receptor and mediates fusion between viral and cellular membranes. Envelope protein is synthesized in the endoplasmic reticulum in the form of heterodimer with protein prM. They play a role in virion budding in the ER, and the newly formed immature particle is covered with 60 spikes composed of heterodimer between precursor prM and envelope protein E. The virion is transported to the Golgi apparatus where the low pH causes dissociation of PrM-E heterodimers and formation of E homodimers. prM-E cleavage is inefficient, and many virions are only partially matured. These uncleaved prM would play a role in immune evasion. Involved in immune evasion, pathogenesis and viral replication. Once cleaved off the polyprotein, is targeted to three destinations: the viral replication cycle, the plasma membrane and the extracellular compartment. Essential for viral replication. Required for formation of the replication complex and recruitment of other non-structural proteins to the ER-derived membrane structures. Excreted as a hexameric lipoparticle that plays a role against host immune response. Antagonizing the complement function. Binds to the host macrophages and dendritic cells. Inhibits signal transduction originating from Toll-like receptor 3 (TLR3). Its function is as follows. Disrupts the host endothelial glycocalyx layer of host pulmonary microvascular endothelial cells, inducing degradation of sialic acid and shedding of heparan sulfate proteoglycans. NS1 induces expression of sialidases, heparanase, and activates cathepsin L, which activates heparanase via enzymatic cleavage. These effects are probably linked to the endothelial hyperpermeability observed in severe dengue disease. This is Genome polyprotein from Dengue virus type 2 (strain Thailand/PUO-218/1980) (DENV-2).